The primary structure comprises 116 residues: Ribosome-binding factor A (116 aa).

This sequence belongs to the RbfA family. Monomer. Binds 30S ribosomal subunits, but not 50S ribosomal subunits or 70S ribosomes.

The protein resides in the cytoplasm. Its function is as follows. One of several proteins that assist in the late maturation steps of the functional core of the 30S ribosomal subunit. Associates with free 30S ribosomal subunits (but not with 30S subunits that are part of 70S ribosomes or polysomes). Required for efficient processing of 16S rRNA. May interact with the 5'-terminal helix region of 16S rRNA. The protein is Ribosome-binding factor A of Streptococcus pyogenes serotype M28 (strain MGAS6180).